Consider the following 313-residue polypeptide: Phosphoenolpyruvate phosphomutase (313 aa).

Aspartate 69 serves as the catalytic Nucleophile.

The protein belongs to the isocitrate lyase/PEP mutase superfamily. PEP mutase family.

It catalyses the reaction phosphoenolpyruvate + H(+) = 3-phosphonopyruvate. It functions in the pathway secondary metabolite biosynthesis; bialaphos biosynthesis. Functionally, formation of a carbon-phosphorus bond by converting phosphoenolpyruvate (PEP) to phosphonopyruvate (P-Pyr). In Streptomyces hygroscopicus, this protein is Phosphoenolpyruvate phosphomutase (bcpB).